The following is a 386-amino-acid chain: Acetate kinase (386 aa).

Asn-7 contributes to the Mg(2+) binding site. Residue Lys-14 participates in ATP binding. Arg-78 contributes to the substrate binding site. Asp-135 (proton donor/acceptor) is an active-site residue. Residues 195 to 199 (HLGNG), 268 to 270 (DMR), and 316 to 320 (GIGEN) contribute to the ATP site. Residue Glu-370 participates in Mg(2+) binding.

It belongs to the acetokinase family. Homodimer. Mg(2+) serves as cofactor. It depends on Mn(2+) as a cofactor.

The protein localises to the cytoplasm. The enzyme catalyses acetate + ATP = acetyl phosphate + ADP. It participates in metabolic intermediate biosynthesis; acetyl-CoA biosynthesis; acetyl-CoA from acetate: step 1/2. In terms of biological role, catalyzes the formation of acetyl phosphate from acetate and ATP. Can also catalyze the reverse reaction. This is Acetate kinase from Pseudarthrobacter chlorophenolicus (strain ATCC 700700 / DSM 12829 / CIP 107037 / JCM 12360 / KCTC 9906 / NCIMB 13794 / A6) (Arthrobacter chlorophenolicus).